The sequence spans 31 residues: Cytochrome b6-f complex subunit 6 (31 aa).

A helical membrane pass occupies residues 4 to 24 (ITSYFGFLLAALTITSAIFIG).

It belongs to the PetL family. The 4 large subunits of the cytochrome b6-f complex are cytochrome b6, subunit IV (17 kDa polypeptide, PetD), cytochrome f and the Rieske protein, while the 4 small subunits are PetG, PetL, PetM and PetN. The complex functions as a dimer.

It localises to the plastid. Its subcellular location is the chloroplast thylakoid membrane. Functionally, component of the cytochrome b6-f complex, which mediates electron transfer between photosystem II (PSII) and photosystem I (PSI), cyclic electron flow around PSI, and state transitions. PetL is important for photoautotrophic growth as well as for electron transfer efficiency and stability of the cytochrome b6-f complex. This is Cytochrome b6-f complex subunit 6 from Ficus carica (Common fig).